Here is a 181-residue protein sequence, read N- to C-terminus: Malignant T-cell-amplified sequence 2 (181 aa).

Positions 92–171 (LPHQQVDKGA…IGIENIHYLN (80 aa)) constitute a PUA domain.

The protein belongs to the MCTS1 family.

The protein resides in the cytoplasm. The chain is Malignant T-cell-amplified sequence 2 from Homo sapiens (Human).